Reading from the N-terminus, the 142-residue chain is UPF0102 protein PsycPRwf_0497 (142 aa).

The protein belongs to the UPF0102 family.

This is UPF0102 protein PsycPRwf_0497 from Psychrobacter sp. (strain PRwf-1).